Here is a 228-residue protein sequence, read N- to C-terminus: Sugar fermentation stimulation protein homolog (228 aa).

Belongs to the SfsA family.

The polypeptide is Sugar fermentation stimulation protein homolog (Psychromonas ingrahamii (strain DSM 17664 / CCUG 51855 / 37)).